We begin with the raw amino-acid sequence, 392 residues long: Speckle-type POZ protein-like A (392 aa).

One can recognise an MATH domain in the interval 31–161 (KFSYMWTINN…DDKLTLFCEV (131 aa)). In terms of domain architecture, BTB spans 200–267 (TDCSLYVGGQ…IYTGKAPNLE (68 aa)).

The protein belongs to the Tdpoz family. Homodimer. Heterodimer with SPOP. Component of cullin-RING-based BCR (BTB-CUL3-RBX1) E3 ubiquitin-protein ligase complexes containing homodimeric SPOPL or the heterodimer formed by SPOP and SPOPL.

The protein resides in the nucleus. Its pathway is protein modification; protein ubiquitination. Functionally, component of a cullin-RING-based BCR (BTB-CUL3-RBX1) E3 ubiquitin-protein ligase complex that mediates the ubiquitination and subsequent proteasomal degradation of target proteins, but with relatively low efficiency. This Danio rerio (Zebrafish) protein is Speckle-type POZ protein-like A (spopla).